The following is a 215-amino-acid chain: Ectodysplasin-A receptor-associated adapter protein (215 aa).

Disordered regions lie at residues 1 to 41 (MGLR…FNMS) and 62 to 86 (LNCP…TGDP). Over residues 17 to 28 (GHQEDHMVKEPV) the composition is skewed to basic and acidic residues. The Death domain occupies 123 to 202 (DVIRIKLDPC…KVLRRWVDEE (80 aa)).

As to quaternary structure, self-associates and binds EDAR, TRAF1, TRAF2 and TRAF3. Detected in adult pancreas, placenta and fetal skin, and at lower levels in lung, thymus, prostate and testis.

The protein resides in the cytoplasm. Functionally, adapter protein that interacts with EDAR DEATH domain and couples the receptor to EDA signaling pathway during morphogenesis of ectodermal organs. Mediates the activation of NF-kappa-B. The sequence is that of Ectodysplasin-A receptor-associated adapter protein (EDARADD) from Homo sapiens (Human).